The chain runs to 231 residues: dTTP/UTP pyrophosphatase (231 aa).

The active-site Proton acceptor is D81.

Belongs to the Maf family. YhdE subfamily. A divalent metal cation serves as cofactor.

The protein resides in the cytoplasm. The catalysed reaction is dTTP + H2O = dTMP + diphosphate + H(+). It catalyses the reaction UTP + H2O = UMP + diphosphate + H(+). Functionally, nucleoside triphosphate pyrophosphatase that hydrolyzes dTTP and UTP. May have a dual role in cell division arrest and in preventing the incorporation of modified nucleotides into cellular nucleic acids. In Lawsonia intracellularis (strain PHE/MN1-00), this protein is dTTP/UTP pyrophosphatase.